The following is a 37-amino-acid chain: Cytochrome b6-f complex subunit 5 (37 aa).

The helical transmembrane segment at 5 to 25 (FLLGIILGLIPITLIGLFVTA) threads the bilayer.

The protein belongs to the PetG family. As to quaternary structure, the 4 large subunits of the cytochrome b6-f complex are cytochrome b6, subunit IV (17 kDa polypeptide, PetD), cytochrome f and the Rieske protein, while the 4 small subunits are PetG, PetL, PetM and PetN. The complex functions as a dimer.

The protein resides in the plastid membrane. Component of the cytochrome b6-f complex, which mediates electron transfer between photosystem II (PSII) and photosystem I (PSI), cyclic electron flow around PSI, and state transitions. PetG is required for either the stability or assembly of the cytochrome b6-f complex. The sequence is that of Cytochrome b6-f complex subunit 5 from Cuscuta obtusiflora (Peruvian dodder).